Here is a 276-residue protein sequence, read N- to C-terminus: Diaminopimelate epimerase (276 aa).

Asparagine 13, glutamine 46, and asparagine 66 together coordinate substrate. Cysteine 75 functions as the Proton donor in the catalytic mechanism. Substrate contacts are provided by residues 76-77 (GN), asparagine 159, asparagine 192, and 210-211 (ER). Cysteine 219 acts as the Proton acceptor in catalysis. 220 to 221 (GT) provides a ligand contact to substrate.

This sequence belongs to the diaminopimelate epimerase family. Homodimer.

It is found in the cytoplasm. The catalysed reaction is (2S,6S)-2,6-diaminopimelate = meso-2,6-diaminopimelate. The protein operates within amino-acid biosynthesis; L-lysine biosynthesis via DAP pathway; DL-2,6-diaminopimelate from LL-2,6-diaminopimelate: step 1/1. Functionally, catalyzes the stereoinversion of LL-2,6-diaminopimelate (L,L-DAP) to meso-diaminopimelate (meso-DAP), a precursor of L-lysine and an essential component of the bacterial peptidoglycan. The sequence is that of Diaminopimelate epimerase from Hahella chejuensis (strain KCTC 2396).